Here is a 431-residue protein sequence, read N- to C-terminus: Beta-1,4-glucuronyltransferase 1 (431 aa).

At 1 to 11 (MHFSKKCSVFK) the chain is on the cytoplasmic side. Residues 12–32 (VVLSALLIVALLQLLYLSFLS) form a helical membrane-spanning segment. Topologically, residues 33–431 (KLHGKQQRYK…AKYPTSPRRC (399 aa)) are lumenal. An N-linked (GlcNAc...) asparagine glycan is attached at Asn216. Residues Asp241 and Asp243 each coordinate Mn(2+). Asn314 carries N-linked (GlcNAc...) asparagine glycosylation.

It belongs to the glycosyltransferase 49 family. The cofactor is Mn(2+).

It is found in the golgi apparatus membrane. The enzyme catalyses 3-O-[beta-D-Xyl-(1-&gt;4)-Rib-ol-P-Rib-ol-P-3-beta-D-GalNAc-(1-&gt;3)-beta-D-GlcNAc-(1-&gt;4)-(O-6-P-alpha-D-Man)]-Thr-[protein] + UDP-alpha-D-glucuronate = 3-O-[beta-D-GlcA-(1-&gt;3)-beta-D-Xyl-(1-&gt;4)-Rib-ol-P-Rib-ol-P-3-beta-D-GalNAc-(1-&gt;3)-beta-D-GlcNAc-(1-&gt;4)-(O-6-P-alpha-D-Man)]-Thr-[protein] + UDP + H(+). The protein operates within protein modification; protein glycosylation. Functionally, beta-1,4-glucuronyltransferase involved in O-mannosylation of alpha-dystroglycan (DAG1). Transfers a glucuronic acid (GlcA) residue onto a xylose (Xyl) acceptor to produce the glucuronyl-beta-1,4-xylose-beta disaccharide primer, which is further elongated by LARGE, during synthesis of phosphorylated O-mannosyl glycan. Phosphorylated O-mannosyl glycan is a carbohydrate structure present in alpha-dystroglycan (DAG1), which is required for binding laminin G-like domain-containing extracellular proteins with high affinity. Required for axon guidance; via its function in O-mannosylation of alpha-dystroglycan (DAG1). This Danio rerio (Zebrafish) protein is Beta-1,4-glucuronyltransferase 1.